Consider the following 357-residue polypeptide: Pheromone receptor 1 (357 aa).

7 consecutive transmembrane segments (helical) span residues 5-25, 32-52, 67-90, 110-130, 145-165, 206-226, and 268-288; these read ITPF…AWHI, LIML…NSMV, LSVR…ARKL, VIID…LMIV, WPMM…VIVV, LLLL…GTIA, and LILA…MFGL. The disordered stretch occupies residues 338-357; it reads ANTSTKSEKSDIDMRGSEAA. Residues 343-357 show a composition bias toward basic and acidic residues; the sequence is KSEKSDIDMRGSEAA.

The protein belongs to the G-protein coupled receptor 4 family.

The protein resides in the membrane. Receptor for the A2 pheromone, a prenylated mating factor. The sequence is that of Pheromone receptor 1 (PRA1) from Mycosarcoma maydis (Corn smut fungus).